Reading from the N-terminus, the 427-residue chain is Glutamate-1-semialdehyde 2,1-aminomutase (427 aa).

Lys-265 is subject to N6-(pyridoxal phosphate)lysine.

It belongs to the class-III pyridoxal-phosphate-dependent aminotransferase family. HemL subfamily. In terms of assembly, homodimer. Requires pyridoxal 5'-phosphate as cofactor.

It is found in the cytoplasm. The catalysed reaction is (S)-4-amino-5-oxopentanoate = 5-aminolevulinate. The protein operates within porphyrin-containing compound metabolism; protoporphyrin-IX biosynthesis; 5-aminolevulinate from L-glutamyl-tRNA(Glu): step 2/2. This chain is Glutamate-1-semialdehyde 2,1-aminomutase, found in Burkholderia vietnamiensis (strain G4 / LMG 22486) (Burkholderia cepacia (strain R1808)).